A 66-amino-acid polypeptide reads, in one-letter code: DNA gyrase inhibitor YacG (66 aa).

Zn(2+) is bound by residues Cys-9, Cys-12, Cys-28, and Cys-32.

This sequence belongs to the DNA gyrase inhibitor YacG family. In terms of assembly, interacts with GyrB. Zn(2+) is required as a cofactor.

Functionally, inhibits all the catalytic activities of DNA gyrase by preventing its interaction with DNA. Acts by binding directly to the C-terminal domain of GyrB, which probably disrupts DNA binding by the gyrase. The chain is DNA gyrase inhibitor YacG from Pseudomonas aeruginosa (strain LESB58).